Reading from the N-terminus, the 108-residue chain is Ig kappa chain V region BS-5 (108 aa).

Positions 1–23 (DVVMTQTPASVSEPVGGTVTIKC) are framework-1. 2 disulfide bridges follow: cysteine 23/cysteine 88 and cysteine 80/glycine 108. The interval 24-34 (QASQSIYSNLA) is complementarity-determining-1. The segment at 35–49 (WYQZKPGQPPKLLIY) is framework-2. The segment at 50 to 56 (KASTLES) is complementarity-determining-2. The framework-3 stretch occupies residues 57-88 (GVPSRFKGSGSGTDFTLTISDLECADAATYFC). Positions 89–97 (QGSBYTGTV) are complementarity-determining-3. Residues 98–107 (FGGGTEVVVK) form a framework-4 region.

This Oryctolagus cuniculus (Rabbit) protein is Ig kappa chain V region BS-5.